The following is a 111-amino-acid chain: U-scoloptoxin(16)-Er8a (111 aa).

The signal sequence occupies residues 1 to 26 (MTSTRKLSVSCLIVFMVSSLIAVSSG).

It belongs to the scoloptoxin-16 family. In terms of processing, contains 4 disulfide bonds. Expressed by the venom gland.

The protein localises to the secreted. This chain is U-scoloptoxin(16)-Er8a, found in Ethmostigmus rubripes (Giant centipede).